A 187-amino-acid chain; its full sequence is Phospholipase A2-gamma (187 aa).

An N-terminal signal peptide occupies residues 1–25 (MITGLALSRVAFGLTAFLLLAVVSS). Disulfide bonds link Cys29–Cys56, Cys33–Cys62, Cys38–Cys115, Cys49–Cys69, Cys68–Cys93, and Cys75–Cys86. Tyr48, Gly50, and Tyr53 together coordinate Ca(2+). The active site involves His72. Asp73 contacts Ca(2+).

Belongs to the phospholipase A2 family. Requires Ca(2+) as cofactor. In terms of tissue distribution, strongly expressed in mature flowers but weakly expressed in other tissues. Detected in buds, open flowers and in pollen.

The protein localises to the secreted. It localises to the golgi apparatus. It is found in the trans-Golgi network. Its subcellular location is the endoplasmic reticulum. It catalyses the reaction a 1,2-diacyl-sn-glycero-3-phosphocholine + H2O = a 1-acyl-sn-glycero-3-phosphocholine + a fatty acid + H(+). Functionally, PA2 catalyzes the calcium-dependent hydrolysis of the 2-acyl groups in 3-sn-phosphoglycerides. Releases lysophospholipids (LPLs) and free fatty acids (FFAs) from membrane phospholipids in response to hormones and other external stimuli. Plays a role in pollen development and germination and tube growth. This Arabidopsis thaliana (Mouse-ear cress) protein is Phospholipase A2-gamma (PLA2-GAMMA).